A 315-amino-acid chain; its full sequence is Glutamyl-Q tRNA(Asp) synthetase (315 aa).

Residues 21-25 (RFAPS) and E63 contribute to the L-glutamate site. The 'HIGH' region signature appears at 24–34 (PSPSGLLHFGS). C119, C121, Y133, and C137 together coordinate Zn(2+). L-glutamate contacts are provided by Y190 and R208. Residues 251-255 (KLSKQ) carry the 'KMSKS' region motif. K254 is a binding site for ATP.

Belongs to the class-I aminoacyl-tRNA synthetase family. GluQ subfamily. Requires Zn(2+) as cofactor.

Its function is as follows. Catalyzes the tRNA-independent activation of glutamate in presence of ATP and the subsequent transfer of glutamate onto a tRNA(Asp). Glutamate is transferred on the 2-amino-5-(4,5-dihydroxy-2-cyclopenten-1-yl) moiety of the queuosine in the wobble position of the QUC anticodon. This Colwellia psychrerythraea (strain 34H / ATCC BAA-681) (Vibrio psychroerythus) protein is Glutamyl-Q tRNA(Asp) synthetase.